A 121-amino-acid chain; its full sequence is Neuromedin-B (121 aa).

The first 24 residues, 1–24, serve as a signal peptide directing secretion; sequence MTRQAGSSWLLRGLLLFALFASGV. Met-56 is subject to Methionine amide. Positions 60–121 are excised as a propeptide; the sequence is SLEPPSLSLV…RRLLEPLLQK (62 aa).

Belongs to the bombesin/neuromedin-B/ranatensin family. As to expression, in the hindbrain, expressed in the medulla surrounding the lateral half of the facial nucleus. Also expressed in the olfactory bulb and hippocampus. Detected in a subset of neurons distributed throughout the retrotrapezoid nucleus/parafacial respiratory group (RTN/pFRG). Within the RTN/pFRG, expressed in neuronal subpopulations distinct from those expressing Grp. Expressed in lung.

Its subcellular location is the secreted. It localises to the cell projection. The protein localises to the neuron projection. Stimulates smooth muscle contraction. Induces sighing by acting directly on the pre-Botzinger complex, a cluster of several thousand neurons in the ventrolateral medulla responsible for inspiration during respiratory activity. Contributes to the induction of sneezing following exposure to chemical irritants or allergens which causes release of NMB by nasal sensory neurons and activation of NMBR-expressing neurons in the sneeze-evoking region of the brainstem. These in turn activate neurons of the caudal ventral respiratory group, giving rise to the sneeze reflex. Contributes to induction of acute itch, possibly through activation of the NMBR receptor on dorsal root ganglion neurons. Increases expression of NMBR and steroidogenic mediators STAR, CYP11A1 and HSD3B1 in Leydig cells, induces secretion of testosterone by Leydig cells and also promotes Leydig cell proliferation. Plays a role in the innate immune response to influenza A virus infection by enhancing interferon alpha expression and reducing expression of IL6. Plays a role in CSF1-induced proliferation of osteoclast precursors by contributing to the positive regulation of the expression of the CSF1 receptor CSF1R. The protein is Neuromedin-B (Nmb) of Mus musculus (Mouse).